The chain runs to 507 residues: ATP synthase subunit alpha, chloroplastic (507 aa).

Gly-170–Thr-177 is a binding site for ATP.

This sequence belongs to the ATPase alpha/beta chains family. As to quaternary structure, F-type ATPases have 2 components, CF(1) - the catalytic core - and CF(0) - the membrane proton channel. CF(1) has five subunits: alpha(3), beta(3), gamma(1), delta(1), epsilon(1). CF(0) has four main subunits: a, b, b' and c.

The protein localises to the plastid. It is found in the chloroplast thylakoid membrane. The catalysed reaction is ATP + H2O + 4 H(+)(in) = ADP + phosphate + 5 H(+)(out). In terms of biological role, produces ATP from ADP in the presence of a proton gradient across the membrane. The alpha chain is a regulatory subunit. The chain is ATP synthase subunit alpha, chloroplastic from Spinacia oleracea (Spinach).